A 297-amino-acid polypeptide reads, in one-letter code: 3-methyl-2-oxobutanoate hydroxymethyltransferase (297 aa).

Polar residues predominate over residues 1–12 (MSEQISEQSEQN). Positions 1–36 (MSEQISEQSEQNVYGACPPVPAGESSPSAASAPRTK) are disordered. The segment covering 22-33 (AGESSPSAASAP) has biased composition (low complexity). Positions 78 and 117 each coordinate Mg(2+). 3-methyl-2-oxobutanoate is bound by residues 78-79 (DS), Asp-117, and Lys-147. Glu-149 is a binding site for Mg(2+). Catalysis depends on Glu-215, which acts as the Proton acceptor.

This sequence belongs to the PanB family. In terms of assembly, homodecamer; pentamer of dimers. It depends on Mg(2+) as a cofactor.

It is found in the cytoplasm. It carries out the reaction 3-methyl-2-oxobutanoate + (6R)-5,10-methylene-5,6,7,8-tetrahydrofolate + H2O = 2-dehydropantoate + (6S)-5,6,7,8-tetrahydrofolate. It functions in the pathway cofactor biosynthesis; (R)-pantothenate biosynthesis; (R)-pantoate from 3-methyl-2-oxobutanoate: step 1/2. In terms of biological role, catalyzes the reversible reaction in which hydroxymethyl group from 5,10-methylenetetrahydrofolate is transferred onto alpha-ketoisovalerate to form ketopantoate. The polypeptide is 3-methyl-2-oxobutanoate hydroxymethyltransferase (Mycobacterium ulcerans (strain Agy99)).